Consider the following 218-residue polypeptide: Phosphoglycolate phosphatase (218 aa).

The Nucleophile role is filled by Asp7. Residues Asp7, Asp9, and Asp167 each contribute to the Mg(2+) site.

Belongs to the HAD-like hydrolase superfamily. CbbY/CbbZ/Gph/YieH family. Requires Mg(2+) as cofactor.

The catalysed reaction is 2-phosphoglycolate + H2O = glycolate + phosphate. Its pathway is organic acid metabolism; glycolate biosynthesis; glycolate from 2-phosphoglycolate: step 1/1. In terms of biological role, specifically catalyzes the dephosphorylation of 2-phosphoglycolate. Is involved in the dissimilation of the intracellular 2-phosphoglycolate formed during the DNA repair of 3'-phosphoglycolate ends, a major class of DNA lesions induced by oxidative stress. This is Phosphoglycolate phosphatase from Cereibacter sphaeroides (strain ATCC 17025 / ATH 2.4.3) (Rhodobacter sphaeroides).